A 540-amino-acid polypeptide reads, in one-letter code: Putative cysteine ligase BshC (540 aa).

Residues 425–453 (IEKVEGMIEQQRRLNKDLLDEVAGNQNNI) adopt a coiled-coil conformation.

This sequence belongs to the BshC family.

Functionally, involved in bacillithiol (BSH) biosynthesis. May catalyze the last step of the pathway, the addition of cysteine to glucosamine malate (GlcN-Mal) to generate BSH. This Staphylococcus aureus (strain NCTC 8325 / PS 47) protein is Putative cysteine ligase BshC.